A 245-amino-acid polypeptide reads, in one-letter code: DNA repair protein RecO (245 aa).

Belongs to the RecO family.

In terms of biological role, involved in DNA repair and RecF pathway recombination. This is DNA repair protein RecO from Klebsiella pneumoniae subsp. pneumoniae (strain ATCC 700721 / MGH 78578).